The sequence spans 731 residues: Alpha-catulin (731 aa).

Residues serine 373 and serine 537 each carry the phosphoserine modification. The segment at 535 to 559 is disordered; the sequence is HLSLPKPTKNSANLKSLKPDKPDSE.

The protein belongs to the vinculin/alpha-catenin family. As to quaternary structure, interacts with ARHGEF1. Interacts with Dtna. The interaction is required for correct localization of both Ctnnal1 and Dtna.

The protein localises to the cytoplasm. It localises to the cytoskeleton. Its subcellular location is the cell membrane. In terms of biological role, may modulate the Rho pathway signaling by providing a scaffold for the Lbc Rho guanine nucleotide exchange factor (ARHGEF1). The chain is Alpha-catulin (Ctnnal1) from Mus musculus (Mouse).